The chain runs to 617 residues: Protelomerase (617 aa).

4 residues coordinate DNA: R270, K295, R376, and H409. Y418 functions as the Nucleophile in the catalytic mechanism. Acidic residues predominate over residues D535–S562. The segment at D535–A575 is disordered. Residues D563–A575 are compositionally biased toward basic and acidic residues.

Belongs to the Caudoviricetes Protelomerase family. Monomer. Homodimer; in presence of DNA.

Converts the circular intermediates produced by the viral replication and carrying a joined telomere site to a linear DNA molecule with covalently closed hairpin ends. The viral circular DNA is cleaved at a palindromic site called telRL thereby generating a linear prophage plasmid with telomeres. Binds covalently to the 3'-phosphoryl of the cleaved strands. The polypeptide is Protelomerase (tel) (Yersinia enterocolitica (Bacteriophage PY54)).